Here is a 312-residue protein sequence, read N- to C-terminus: Lipoyl synthase (312 aa).

Cys37, Cys42, Cys48, Cys67, Cys71, Cys74, and Ser281 together coordinate [4Fe-4S] cluster. One can recognise a Radical SAM core domain in the interval 52–270; the sequence is RDGPGTATFM…AVAEREFDFL (219 aa).

This sequence belongs to the radical SAM superfamily. Lipoyl synthase family. It depends on [4Fe-4S] cluster as a cofactor.

It is found in the cytoplasm. The enzyme catalyses [[Fe-S] cluster scaffold protein carrying a second [4Fe-4S](2+) cluster] + N(6)-octanoyl-L-lysyl-[protein] + 2 oxidized [2Fe-2S]-[ferredoxin] + 2 S-adenosyl-L-methionine + 4 H(+) = [[Fe-S] cluster scaffold protein] + N(6)-[(R)-dihydrolipoyl]-L-lysyl-[protein] + 4 Fe(3+) + 2 hydrogen sulfide + 2 5'-deoxyadenosine + 2 L-methionine + 2 reduced [2Fe-2S]-[ferredoxin]. The protein operates within protein modification; protein lipoylation via endogenous pathway; protein N(6)-(lipoyl)lysine from octanoyl-[acyl-carrier-protein]: step 2/2. Functionally, catalyzes the radical-mediated insertion of two sulfur atoms into the C-6 and C-8 positions of the octanoyl moiety bound to the lipoyl domains of lipoate-dependent enzymes, thereby converting the octanoylated domains into lipoylated derivatives. The chain is Lipoyl synthase from Halorubrum lacusprofundi (strain ATCC 49239 / DSM 5036 / JCM 8891 / ACAM 34).